Here is a 443-residue protein sequence, read N- to C-terminus: Xaa-Pro dipeptidase (443 aa).

Mn(2+) is bound by residues aspartate 246, aspartate 257, histidine 339, glutamate 384, and glutamate 423.

It belongs to the peptidase M24B family. Bacterial-type prolidase subfamily. Requires Mn(2+) as cofactor.

The enzyme catalyses Xaa-L-Pro dipeptide + H2O = an L-alpha-amino acid + L-proline. In terms of biological role, splits dipeptides with a prolyl residue in the C-terminal position. This chain is Xaa-Pro dipeptidase, found in Escherichia coli O81 (strain ED1a).